The primary structure comprises 194 residues: Peptidyl-tRNA hydrolase (194 aa).

Residue Tyr-16 coordinates tRNA. Residue His-21 is the Proton acceptor of the active site. TRNA contacts are provided by Phe-67, Asn-69, and Asn-115.

Belongs to the PTH family. As to quaternary structure, monomer.

The protein localises to the cytoplasm. It carries out the reaction an N-acyl-L-alpha-aminoacyl-tRNA + H2O = an N-acyl-L-amino acid + a tRNA + H(+). Functionally, hydrolyzes ribosome-free peptidyl-tRNAs (with 1 or more amino acids incorporated), which drop off the ribosome during protein synthesis, or as a result of ribosome stalling. Catalyzes the release of premature peptidyl moieties from peptidyl-tRNA molecules trapped in stalled 50S ribosomal subunits, and thus maintains levels of free tRNAs and 50S ribosomes. The polypeptide is Peptidyl-tRNA hydrolase (Klebsiella pneumoniae (strain 342)).